We begin with the raw amino-acid sequence, 264 residues long: Indole-3-glycerol phosphate synthase (264 aa).

It belongs to the TrpC family.

It catalyses the reaction 1-(2-carboxyphenylamino)-1-deoxy-D-ribulose 5-phosphate + H(+) = (1S,2R)-1-C-(indol-3-yl)glycerol 3-phosphate + CO2 + H2O. It participates in amino-acid biosynthesis; L-tryptophan biosynthesis; L-tryptophan from chorismate: step 4/5. This Lactococcus lactis subsp. cremoris (strain MG1363) protein is Indole-3-glycerol phosphate synthase.